We begin with the raw amino-acid sequence, 279 residues long: Shikimate dehydrogenase (NADP(+)) (279 aa).

Residues 19–21 (SRS) and T66 contribute to the shikimate site. Residue K70 is the Proton acceptor of the active site. Residues N91 and D106 each contribute to the shikimate site. NADP(+) is bound by residues 129–133 (GAGGA), 152–157 (NRTLER), and I218. A shikimate-binding site is contributed by Y220. G241 contacts NADP(+).

Belongs to the shikimate dehydrogenase family. In terms of assembly, homodimer.

The catalysed reaction is shikimate + NADP(+) = 3-dehydroshikimate + NADPH + H(+). Its pathway is metabolic intermediate biosynthesis; chorismate biosynthesis; chorismate from D-erythrose 4-phosphate and phosphoenolpyruvate: step 4/7. Its function is as follows. Involved in the biosynthesis of the chorismate, which leads to the biosynthesis of aromatic amino acids. Catalyzes the reversible NADPH linked reduction of 3-dehydroshikimate (DHSA) to yield shikimate (SA). In Gluconobacter oxydans (strain 621H) (Gluconobacter suboxydans), this protein is Shikimate dehydrogenase (NADP(+)).